The sequence spans 135 residues: ATP synthase epsilon chain (135 aa).

Belongs to the ATPase epsilon chain family. As to quaternary structure, F-type ATPases have 2 components, CF(1) - the catalytic core - and CF(0) - the membrane proton channel. CF(1) has five subunits: alpha(3), beta(3), gamma(1), delta(1), epsilon(1). CF(0) has three main subunits: a, b and c.

Its subcellular location is the cell inner membrane. Functionally, produces ATP from ADP in the presence of a proton gradient across the membrane. This Hyphomonas neptunium (strain ATCC 15444) protein is ATP synthase epsilon chain.